The chain runs to 269 residues: MASANTRRVGDGAGGAFQPYLDSLRQELQQRDPTLLSVAVAVLAVLLTLVFWKFIWSRKSSQRAVLFVGLCDSGKTLLFVRLLTGQYRDTQTSITDSSAIYKVNNNRGNSLTLIDLPGHESLRLQFLDRFKSSARAVVFVVDSATFQREVKDVAEFLYQVLIDSMALKNTPAFLVACNKQDIAMAKSAKLIQQQLEKELNTLRVTRSAAPSTLDSSSTAPAQLGKKGKEFEFSQLPLKVEFLECSAKGGRGDAGSADVQDLEKWLAKIA.

The chain crosses the membrane as a helical span at residues 35 to 55 (LLSVAVAVLAVLLTLVFWKFI). GTP-binding positions include 69–77 (GLCDSGKTL) and 90–93 (TQTS). Residue Ser-110 is modified to Phosphoserine. Gly-118 serves as a coordination point for GTP. Position 212 is a phosphothreonine (Thr-212). Ala-246 is a GTP binding site.

Belongs to the SRP receptor beta subunit family. As to quaternary structure, heterodimer with SRPRA.

It localises to the endoplasmic reticulum membrane. Functionally, component of the signal recognition particle (SRP) complex receptor (SR). Ensures, in conjunction with the SRP complex, the correct targeting of the nascent secretory proteins to the endoplasmic reticulum membrane system. May mediate the membrane association of SR. This is Signal recognition particle receptor subunit beta (Srprb) from Rattus norvegicus (Rat).